The sequence spans 187 residues: Probable chorismate pyruvate-lyase (187 aa).

Arginine 80, leucine 118, and glutamate 170 together coordinate substrate.

This sequence belongs to the UbiC family.

It localises to the cytoplasm. The enzyme catalyses chorismate = 4-hydroxybenzoate + pyruvate. The protein operates within cofactor biosynthesis; ubiquinone biosynthesis. Its function is as follows. Removes the pyruvyl group from chorismate, with concomitant aromatization of the ring, to provide 4-hydroxybenzoate (4HB) for the ubiquinone pathway. The protein is Probable chorismate pyruvate-lyase of Pseudomonas fluorescens (strain ATCC BAA-477 / NRRL B-23932 / Pf-5).